Here is a 360-residue protein sequence, read N- to C-terminus: Dihydroorotate dehydrogenase (quinone) (360 aa).

FMN is bound by residues 66–70 and Thr90; that span reads AGFDK. Residue Lys70 coordinates substrate. Residue 115-119 participates in substrate binding; that stretch reads NRMGF. Positions 143 and 176 each coordinate FMN. Substrate is bound at residue Asn176. The active-site Nucleophile is Ser179. Asn181 is a binding site for substrate. Residues Lys212 and Thr240 each coordinate FMN. Position 241 to 242 (241 to 242) interacts with substrate; the sequence is NT. FMN is bound by residues Gly264, Gly293, and 314 to 315; that span reads YT.

It belongs to the dihydroorotate dehydrogenase family. Type 2 subfamily. Monomer. FMN is required as a cofactor.

Its subcellular location is the cell membrane. It carries out the reaction (S)-dihydroorotate + a quinone = orotate + a quinol. It functions in the pathway pyrimidine metabolism; UMP biosynthesis via de novo pathway; orotate from (S)-dihydroorotate (quinone route): step 1/1. Catalyzes the conversion of dihydroorotate to orotate with quinone as electron acceptor. The polypeptide is Dihydroorotate dehydrogenase (quinone) (Mycobacterium marinum (strain ATCC BAA-535 / M)).